The chain runs to 455 residues: Ammonium transporter Rh type B (455 aa).

Residues 1 to 10 are Cytoplasmic-facing; that stretch reads MARIPRHRRL. A helical transmembrane segment spans residues 11-31; the sequence is VLPLLCLLFQGATSLLFAIFV. Residues 32–58 lie on the Extracellular side of the membrane; sequence RYNHETDAALWHWGNHSNVDNEFYFRY. Asn-46 carries an N-linked (GlcNAc...) asparagine glycan. A helical membrane pass occupies residues 59–79; it reads PSFQDVHVMVFVGFGFLMVFL. Topologically, residues 80 to 83 are cytoplasmic; it reads QRYG. The helical transmembrane segment at 84–104 threads the bilayer; that stretch reads FSSVGFTFLVATFTLQWATLL. Residues 105–121 lie on the Extracellular side of the membrane; sequence QGFLHSFHGGHIHIGVE. A helical transmembrane segment spans residues 122–142; sequence SLINADFCAGAVLISFGAVLG. Topologically, residues 143–148 are cytoplasmic; that stretch reads KTGPAQ. The helical transmembrane segment at 149-169 threads the bilayer; it reads LLLMALLEAVLFSVNEFILLS. The Extracellular portion of the chain corresponds to 170 to 176; that stretch reads LLGVRDA. A helical membrane pass occupies residues 177 to 197; it reads GGSMTIHTFGAYFGLFLSRVL. At 198-216 the chain is on the cytoplasmic side; that stretch reads YRSQLEKSRHRQTSVYNSD. A helical membrane pass occupies residues 217 to 237; it reads LFAMIGTIFLWVFWPSFNSAP. At 238–247 the chain is on the extracellular side; sequence TALGDGQHRT. The helical transmembrane segment at 248 to 270 threads the bilayer; the sequence is VVNTYYSLTASTLSTFALSALVS. The Cytoplasmic segment spans residues 271–274; the sequence is GDGR. A helical transmembrane segment spans residues 275-295; that stretch reads LDMVHIQNAALAGGVVVGTAS. Residue Glu-296 is a topological domain, extracellular. A helical transmembrane segment spans residues 297-317; sequence MMLTPFGALAAGFLAGTVSTL. Topologically, residues 318 to 340 are cytoplasmic; sequence GYKFFTPILESRFKLQDTCGVHN. Residues 341-361 traverse the membrane as a helical segment; the sequence is LHGMPGLLGAILGVLVAALAT. The Extracellular segment spans residues 362 to 390; that stretch reads HEAYGDGLQTVFPLIAKGQRSATSQAMYQ. Residues 391–411 traverse the membrane as a helical segment; it reads LFGMFVTLVFASVGGSLGGLL. Topologically, residues 412–455 are cytoplasmic; sequence LKLPFLDSPPDSQCFEDQVYWEVPGEQEAETQRPLRTEEPDTQA. Residues 413 to 421 form an interaction with ANK3 region; the sequence is KLPFLDSPP.

It belongs to the ammonium transporter (TC 2.A.49) family. Rh subfamily. In terms of assembly, interacts (via C-terminus) with ANK2 and ANK3; required for targeting to the basolateral membrane. N-glycosylated. Expressed in kidney by connecting segments and collecting tubules (at protein level).

It localises to the basolateral cell membrane. The protein localises to the cytoplasmic vesicle membrane. It carries out the reaction NH4(+)(in) = NH4(+)(out). The enzyme catalyses methylamine(out) = methylamine(in). It catalyses the reaction CO2(out) = CO2(in). Functionally, ammonium transporter involved in the maintenance of acid-base homeostasis. Transports ammonium and its related derivative methylammonium across the basolateral plasma membrane of epithelial cells likely contributing to renal transepithelial ammonia transport and ammonia metabolism. May transport either NH4(+) or NH3 ammonia species predominantly mediating an electrogenic NH4(+) transport. May act as a CO2 channel providing for renal acid secretion. The sequence is that of Ammonium transporter Rh type B (Rhbg) from Rattus norvegicus (Rat).